The chain runs to 382 residues: uncharacterized protein (382 aa).

12 helical membrane-spanning segments follow: residues 14-34 (GLLLLTLAIAVLNTLVPLWLA), 45-65 (MVSSSYFTGNLVGTLLTGYLI), 79-99 (LVFAAGCLGLGLMIGFWSWMA), 102-122 (FVAGVGCAMIWVVVESALMCS), 131-151 (LLAAYMMIYYVGTFLGQLLVS), 157-177 (LMNVLPWVTALILAGILPLLF), 204-224 (LGVNGCIISGIVLGSLYGLMP), 236-256 (NIGFWMAVLVSAGIVGQWPIG), 265-285 (LLVLRVQIFVVILGSIAMLTH), 289-309 (APALFILGAAGFTLYPVAMAW), 325-345 (ALLLSYTIGSLLGPSFTAMLM), and 349-369 (SDNLLFIMIASVSFIYLLMLL).

It belongs to the major facilitator superfamily. YcaD (TC 2.A.1.26) family.

It is found in the cell inner membrane. This is an uncharacterized protein from Escherichia fergusonii (strain ATCC 35469 / DSM 13698 / CCUG 18766 / IAM 14443 / JCM 21226 / LMG 7866 / NBRC 102419 / NCTC 12128 / CDC 0568-73).